Consider the following 365-residue polypeptide: Growth-regulating factor 7 (365 aa).

A QLQ domain is found at 59-94 (PFTNAQLKELERQAMIYKYMIASIPVPFDLLVSSPS). The region spanning 107-151 (DLEPGRCRRTDGKKWRCAKEVVSNHKYCEKHLHRGRPRSRKHVEP) is the WRC domain. 2 short sequence motifs (bipartite nuclear localization signal) span residues 112–122 (RCRRTDGKKWR) and 140–147 (RGRPRSRK). Residues 137-147 (HLHRGRPRSRK) are compositionally biased toward basic residues. 2 disordered regions span residues 137-187 (HLHR…TLEP) and 332-365 (IESY…SSQV). Over residues 337-365 (LMETPTPSSSPSRVMKKMTSSVSDESSQV) the composition is skewed to polar residues.

This sequence belongs to the GRF family.

It is found in the nucleus. Transcription activator that plays a role in the regulation of cell expansion in leaf and cotyledons tissues. Component of a network formed by miR396, the GRFs and their interacting factors (GIFs) acting in the regulation of meristem function, at least partially through the control of cell proliferation. The sequence is that of Growth-regulating factor 7 (GRF7) from Arabidopsis thaliana (Mouse-ear cress).